We begin with the raw amino-acid sequence, 908 residues long: Auxin response factor 6 (908 aa).

Residues 1–21 (MKLSPSAGGVSDQPPSPPEVA) form a disordered region. The segment at residues 134–236 (FCKTLTASDT…QLLLGIRRAN (103 aa)) is a DNA-binding region (TF-B3). Residues 525 to 556 (NEQKPQLQPQQQQQESHQQQPQHQQMQQQKHL) are disordered. Residues 526-556 (EQKPQLQPQQQQQESHQQQPQHQQMQQQKHL) show a composition bias toward low complexity. Residues 777 to 861 (ATFVKVYKSG…SCIKILSPQE (85 aa)) enclose the PB1 domain.

It belongs to the ARF family. As to quaternary structure, homodimers and heterodimers.

The protein localises to the nucleus. Auxin response factors (ARFs) are transcriptional factors that bind specifically to the DNA sequence 5'-TGTCTC-3' found in the auxin-responsive promoter elements (AuxREs). The polypeptide is Auxin response factor 6 (ARF6) (Oryza sativa subsp. indica (Rice)).